The chain runs to 307 residues: UPF0276 protein Bphyt_5128 (307 aa).

It belongs to the UPF0276 family.

The sequence is that of UPF0276 protein Bphyt_5128 from Paraburkholderia phytofirmans (strain DSM 17436 / LMG 22146 / PsJN) (Burkholderia phytofirmans).